The chain runs to 925 residues: Serine/threonine-protein phosphatase 1 regulatory subunit 10 (925 aa).

Residues 1–348 (MGSGPIDPKE…EPAPPSEAMD (348 aa)) form an interaction with TOX4 region. In terms of domain architecture, TFIIS N-terminal spans 73–147 (KLLNNWLTYS…SDWMAVIRSQ (75 aa)). The tract at residues 147-211 (QSSTQPAEKD…APSHAKFRST (65 aa)) is disordered. Basic and acidic residues-rich tracts occupy residues 153–166 (AEKD…EGKS) and 174–196 (PLTE…EKPK). Glycyl lysine isopeptide (Lys-Gly) (interchain with G-Cter in SUMO2) cross-links involve residues lysine 179 and lysine 262. 3 disordered regions span residues 304–398 (KIKK…KRKT), 536–555 (TLEP…SKLP), and 587–890 (SIMG…HGGD). Residue serine 313 is modified to Phosphoserine. Residues 325–336 (KTSTEPSTAKPS) are compositionally biased toward low complexity. The interval 357–433 (PPVEVPELMD…NKIKDFGEAA (77 aa)) is necessary for interaction with PPP1CA. Serine 382 is modified (phosphoserine). The segment at 393–408 (GRKRKTVTWPEEGKLR) is necessary for interaction with PPP1CC. The PP1-binding motif signature appears at 394-423 (RKRKTVTWPEEGKLREYFYFELDETERVNV). Residue threonine 398 is modified to Phosphothreonine; by PKA. An interaction with WDR82 region spans residues 418 to 619 (TERVNVNKIK…IKQMLVPHGL (202 aa)). Residues 540–551 (GGAGGSPDGAGG) are compositionally biased toward gly residues. Phosphoserine is present on residues serine 545 and serine 591. Over residues 596–611 (PSEELLKQPDYSDKIK) the composition is skewed to basic and acidic residues. Residues 644–655 (PPGPGGPMPGPH) are compositionally biased toward pro residues. Gly residues predominate over residues 656 to 665 (GGPGGPGGPV). An Omega-N-methylarginine modification is found at arginine 668. Residues 679–693 (GDPFWDGPGDPMRGG) show a composition bias toward low complexity. Omega-N-methylarginine is present on residues arginine 696 and arginine 741. 2 stretches are compositionally biased toward gly residues: residues 728-766 (ARGG…GMSS) and 775-829 (GPGG…AGGG). Composition is skewed to basic and acidic residues over residues 846–871 (PHDV…HDGP) and 879–890 (RGHDGGHNHGGD). The C3H1-type zinc finger occupies 891 to 919 (MSKRPVCRHFMMKGNCRYENNCAFYHPGV).

In terms of assembly, component of the PNUTS-PP1 complex (also named PTW/PP1 complex), composed of PPP1R10/PNUTS, TOX4, WDR82, and PPP1CA (or PPP1CB or PPP1CC). In terms of processing, phosphorylated on Ser-398 by PKA within the region necessary for interaction with PPP1CA.

The protein resides in the nucleus. It is found in the chromosome. Functionally, substrate-recognition component of the PNUTS-PP1 protein phosphatase complex, a protein phosphatase 1 (PP1) complex that promotes RNA polymerase II transcription pause-release, allowing transcription elongation. Promoter-proximal pausing by RNA polymerase II is a transcription halt following transcription initiation but prior to elongation, which acts as a checkpoint to control that transcripts are favorably configured for transcriptional elongation. The PNUTS-PP1 complex mediates the release of RNA polymerase II from promoter-proximal region of genes by catalyzing dephosphorylation of proteins involved in transcription, such as AFF4, CDK9, MEPCE, INTS12, NCBP1, POLR2M/GDOWN1 and SUPT6H. The PNUTS-PP1 complex also regulates RNA polymerase II transcription termination by mediating dephosphorylation of SUPT5H in termination zones downstream of poly(A) sites, thereby promoting deceleration of RNA polymerase II transcription. PNUTS-PP1 complex is also involved in the response to replication stress by mediating dephosphorylation of POLR2A at 'Ser-5' of the CTD, promoting RNA polymerase II degradation. The PNUTS-PP1 complex also plays a role in the control of chromatin structure and cell cycle progression during the transition from mitosis into interphase. PNUTS-PP1 complex mediates dephosphorylation of MYC, promoting MYC stability by preventing MYC ubiquitination by the SCF(FBXW7) complex. In addition to acts as a substrate-recognition component, PPP1R10/PNUTS also acts as a nuclear targeting subunit for the PNUTS-PP1 complex. In some context, PPP1R10/PNUTS also acts as an inhibitor of protein phosphatase 1 (PP1) activity by preventing access to substrates, such as RB. The chain is Serine/threonine-protein phosphatase 1 regulatory subunit 10 (PPP1R10) from Sus scrofa (Pig).